A 289-amino-acid chain; its full sequence is Bifunctional protein FolD (289 aa).

Residues 165 to 167 (GAS) and Ser-190 contribute to the NADP(+) site.

Belongs to the tetrahydrofolate dehydrogenase/cyclohydrolase family. Homodimer.

It catalyses the reaction (6R)-5,10-methylene-5,6,7,8-tetrahydrofolate + NADP(+) = (6R)-5,10-methenyltetrahydrofolate + NADPH. The enzyme catalyses (6R)-5,10-methenyltetrahydrofolate + H2O = (6R)-10-formyltetrahydrofolate + H(+). The protein operates within one-carbon metabolism; tetrahydrofolate interconversion. In terms of biological role, catalyzes the oxidation of 5,10-methylenetetrahydrofolate to 5,10-methenyltetrahydrofolate and then the hydrolysis of 5,10-methenyltetrahydrofolate to 10-formyltetrahydrofolate. The sequence is that of Bifunctional protein FolD from Ralstonia nicotianae (strain ATCC BAA-1114 / GMI1000) (Ralstonia solanacearum).